Consider the following 543-residue polypeptide: Protein B602L (543 aa).

A run of 13 repeats spans residues 161-164 (CAST), 165-168 (CAST), 169-172 (CAST), 173-176 (CAST), 177-180 (CADT), 181-184 (NVDT), 185-188 (CTDT), 189-192 (CAST), 193-196 (CADT), 197-200 (NVDT), 201-204 (CAST), 205-208 (CADT), and 209-212 (CAST). The 13 X 4 AA tandem repeats of [CN]-[ATV]-[DS]-T stretch occupies residues 161–212 (CASTCASTCASTCASTCADTNVDTCTDTCASTCADTNVDTCASTCADTCAST).

The protein belongs to the asfivirus B602L family.

The protein resides in the host cytoplasm. Functionally, plays an essential role in the assembly of the icosahedral capsid of the virus. Allows the assembly of 3 molecules of hexon protein p72 and formation of a thermostable trimer. This chain is Protein B602L, found in African swine fever virus (isolate Pig/Kenya/KEN-50/1950) (ASFV).